Here is a 269-residue protein sequence, read N- to C-terminus: NAD kinase (269 aa).

Catalysis depends on Asp62, which acts as the Proton acceptor. Residues 62–63 (DG), 130–131 (NE), Lys141, Arg158, Asp160, 171–176 (TAYAMS), Ala195, and Gln229 contribute to the NAD(+) site.

The protein belongs to the NAD kinase family. It depends on a divalent metal cation as a cofactor.

It is found in the cytoplasm. The catalysed reaction is NAD(+) + ATP = ADP + NADP(+) + H(+). Functionally, involved in the regulation of the intracellular balance of NAD and NADP, and is a key enzyme in the biosynthesis of NADP. Catalyzes specifically the phosphorylation on 2'-hydroxyl of the adenosine moiety of NAD to yield NADP. This chain is NAD kinase, found in Methanospirillum hungatei JF-1 (strain ATCC 27890 / DSM 864 / NBRC 100397 / JF-1).